A 356-amino-acid polypeptide reads, in one-letter code: S-adenosylmethionine:tRNA ribosyltransferase-isomerase (356 aa).

This sequence belongs to the QueA family. In terms of assembly, monomer.

It localises to the cytoplasm. The enzyme catalyses 7-aminomethyl-7-carbaguanosine(34) in tRNA + S-adenosyl-L-methionine = epoxyqueuosine(34) in tRNA + adenine + L-methionine + 2 H(+). Its pathway is tRNA modification; tRNA-queuosine biosynthesis. Its function is as follows. Transfers and isomerizes the ribose moiety from AdoMet to the 7-aminomethyl group of 7-deazaguanine (preQ1-tRNA) to give epoxyqueuosine (oQ-tRNA). The protein is S-adenosylmethionine:tRNA ribosyltransferase-isomerase of Chromohalobacter salexigens (strain ATCC BAA-138 / DSM 3043 / CIP 106854 / NCIMB 13768 / 1H11).